The sequence spans 358 residues: Protein UL24 (358 aa).

The protein belongs to the herpesviridae US22 family.

The protein localises to the virion tegument. The polypeptide is Protein UL24 (UL24) (Homo sapiens (Human)).